Reading from the N-terminus, the 143-residue chain is Mannitol-specific phosphotransferase enzyme IIA component (143 aa).

Residues 2 to 142 (QVLAKENIKL…EDLIAIFNEV (141 aa)) form the PTS EIIA type-2 domain. The active-site Tele-phosphohistidine intermediate is histidine 62. The residue at position 62 (histidine 62) is a Phosphohistidine; by HPr. Serine 74 carries the post-translational modification Phosphoserine.

The protein localises to the cytoplasm. Its function is as follows. The phosphoenolpyruvate-dependent sugar phosphotransferase system (sugar PTS), a major carbohydrate active transport system, catalyzes the phosphorylation of incoming sugar substrates concomitantly with their translocation across the cell membrane. The enzyme II CmtAB PTS system is involved in D-mannitol transport. The protein is Mannitol-specific phosphotransferase enzyme IIA component (mtlF) of Bacillus subtilis (strain 168).